The sequence spans 309 residues: Dicarboxylate carrier UCP2 (309 aa).

At 1-16 the chain is on the mitochondrial intermembrane side; that stretch reads MVGFKATDVPPTATVK. Solcar repeat units follow at residues 11-106, 114-203, and 212-297; these read PTAT…VKQF, AGIG…IKDA, and DDLP…LKRA. The important for interaction with long-chain fatty acids stretch occupies residues 16-63; the sequence is KFLGAGTAACIADLITFPLDTAKVRLQIQGERQGPVRAAASAQYRGVL. The chain crosses the membrane as a helical span at residues 17–40; the sequence is FLGAGTAACIADLITFPLDTAKVR. Residues 41–77 lie on the Mitochondrial matrix side of the membrane; that stretch reads LQIQGERQGPVRAAASAQYRGVLCTILTMVRTEGPRS. A helical transmembrane segment spans residues 78 to 103; it reads LYSGLVAGLQRQMSFASVRIGLYDSV. The Mitochondrial intermembrane portion of the chain corresponds to 104-119; that stretch reads KQFYTKGSEHAGIGSR. The helical transmembrane segment at 120 to 145 threads the bilayer; sequence LLAGSTTGALAVAVAQPTDVVKVRFQ. The Mitochondrial matrix segment spans residues 146-173; the sequence is AQARAGSGRRYQSTVDAYKTIAREEGFR. Residues 174 to 199 form a helical membrane-spanning segment; sequence GLWKGTSPNVARNAIVNCAELVTYDL. Over 200–217 the chain is Mitochondrial intermembrane; the sequence is IKDALLKANLMTDDLPCH. The helical transmembrane segment at 218–242 threads the bilayer; the sequence is FTSAFGAGFCTTVIASPVDVVKTRY. Residues 243–268 lie on the Mitochondrial matrix side of the membrane; the sequence is MNSALGQYSSAGHCALTMLQKEGPRA. Residues 269-294 traverse the membrane as a helical segment; sequence FYKGFMPSFLRLGSWNVVMFVTYEQL. The interval 278 to 285 is important for interaction with long-chain fatty acids; that stretch reads LRLGSWNV. At 295–309 the chain is on the mitochondrial intermembrane side; it reads KRALMAACTSREAPF.

It belongs to the mitochondrial carrier (TC 2.A.29) family. As to quaternary structure, homotetramer. Adopts an asymmetrical dimer of dimers functional form. Interacts with MICU1 (when methylated); leading to decrease the calcium sensitivity of MICU1.

It localises to the mitochondrion inner membrane. It carries out the reaction L-aspartate(out) + phosphate(in) + H(+)(in) = L-aspartate(in) + phosphate(out) + H(+)(out). The catalysed reaction is oxaloacetate(out) + phosphate(in) + H(+)(in) = oxaloacetate(in) + phosphate(out) + H(+)(out). It catalyses the reaction (S)-malate(out) + phosphate(in) + H(+)(in) = (S)-malate(in) + phosphate(out) + H(+)(out). The enzyme catalyses malonate(out) + phosphate(in) + H(+)(in) = malonate(in) + phosphate(out) + H(+)(out). It carries out the reaction sulfate(out) + phosphate(in) + H(+)(in) = sulfate(in) + phosphate(out) + H(+)(out). The catalysed reaction is (S)-malate(out) = (S)-malate(in). It catalyses the reaction L-aspartate(out) = L-aspartate(in). The enzyme catalyses phosphate(in) = phosphate(out). It carries out the reaction chloride(in) = chloride(out). The catalysed reaction is H(+)(in) = H(+)(out). It catalyses the reaction a long-chain fatty acid(out) = a long-chain fatty acid(in). Functionally, antiporter that exports dicarboxylate intermediates of the Krebs cycle in exchange for phosphate plus a proton across the inner membrane of mitochondria, a process driven by mitochondrial motive force with an overall impact on glycolysis, glutaminolysis and glutathione-dependent redox balance. Continuous export of oxaloacetate and related four-carbon dicarboxylates from mitochondrial matrix into the cytosol negatively regulates the oxidation of acetyl-CoA substrates via the Krebs cycle lowering the ATP/ADP ratio and reactive oxygen species (ROS) production. May mediate inducible proton entry into the mitochondrial matrix affecting ATP turnover as a protection mechanism against oxidative stress. The proton currents are most likely associated with fatty acid flipping across the inner membrane of mitochondria in a metabolic process regulated by free fatty acids and purine nucleotides. Regulates the use of glucose as a source of energy. Required for glucose-induced DRP1-dependent mitochondrial fission and neuron activation in the ventromedial nucleus of the hypothalamus (VMH). This mitochondrial adaptation mechanism modulates the VMH pool of glucose-excited neurons with an impact on systemic glucose homeostasis. Regulates ROS levels and metabolic reprogramming of macrophages during the resolution phase of inflammation. Attenuates ROS production in response to IL33 to preserve the integrity of the Krebs cycle required for persistent production of itaconate and subsequent GATA3-dependent differentiation of inflammation-resolving alternatively activated macrophages. Can unidirectionally transport anions including L-malate, L-aspartate, phosphate and chloride ions. Does not mediate adaptive thermogenesis. The polypeptide is Dicarboxylate carrier UCP2 (UCP2) (Canis lupus familiaris (Dog)).